The chain runs to 304 residues: ADP-polyphosphate phosphotransferase (304 aa).

This sequence belongs to the polyphosphate kinase 2 (PPK2) family. Class I subfamily.

It catalyses the reaction [phosphate](n) + ATP = [phosphate](n+1) + ADP. In terms of biological role, uses inorganic polyphosphate (polyP) as a donor to convert ADP to ATP. The polypeptide is ADP-polyphosphate phosphotransferase (Pseudomonas aeruginosa (strain ATCC 15692 / DSM 22644 / CIP 104116 / JCM 14847 / LMG 12228 / 1C / PRS 101 / PAO1)).